A 161-amino-acid polypeptide reads, in one-letter code: 2-C-methyl-D-erythritol 2,4-cyclodiphosphate synthase (161 aa).

Residues D10 and H12 each contribute to the a divalent metal cation site. 4-CDP-2-C-methyl-D-erythritol 2-phosphate-binding positions include 10–12 and 36–37; these read DVH and HS. An a divalent metal cation-binding site is contributed by H44. Residues 58-60, 63-67, and R144 contribute to the 4-CDP-2-C-methyl-D-erythritol 2-phosphate site; these read DIG and FSDTD.

It belongs to the IspF family. In terms of assembly, homotrimer. A divalent metal cation serves as cofactor.

It catalyses the reaction 4-CDP-2-C-methyl-D-erythritol 2-phosphate = 2-C-methyl-D-erythritol 2,4-cyclic diphosphate + CMP. Its pathway is isoprenoid biosynthesis; isopentenyl diphosphate biosynthesis via DXP pathway; isopentenyl diphosphate from 1-deoxy-D-xylulose 5-phosphate: step 4/6. Involved in the biosynthesis of isopentenyl diphosphate (IPP) and dimethylallyl diphosphate (DMAPP), two major building blocks of isoprenoid compounds. Catalyzes the conversion of 4-diphosphocytidyl-2-C-methyl-D-erythritol 2-phosphate (CDP-ME2P) to 2-C-methyl-D-erythritol 2,4-cyclodiphosphate (ME-CPP) with a corresponding release of cytidine 5-monophosphate (CMP). The protein is 2-C-methyl-D-erythritol 2,4-cyclodiphosphate synthase of Burkholderia ambifaria (strain ATCC BAA-244 / DSM 16087 / CCUG 44356 / LMG 19182 / AMMD) (Burkholderia cepacia (strain AMMD)).